Here is a 373-residue protein sequence, read N- to C-terminus: Queuine tRNA-ribosyltransferase (373 aa).

Asp94 serves as the catalytic Proton acceptor. Substrate-binding positions include 94–98 (DSGGF), Asp148, Gln190, and Gly217. An RNA binding region spans residues 248–254 (GVGSPDC). Asp267 functions as the Nucleophile in the catalytic mechanism. Positions 272-276 (TRIAR) are RNA binding; important for wobble base 34 recognition. Zn(2+) is bound by residues Cys305, Cys307, Cys310, and His336.

This sequence belongs to the queuine tRNA-ribosyltransferase family. As to quaternary structure, homodimer. Within each dimer, one monomer is responsible for RNA recognition and catalysis, while the other monomer binds to the replacement base PreQ1. The cofactor is Zn(2+).

It carries out the reaction 7-aminomethyl-7-carbaguanine + guanosine(34) in tRNA = 7-aminomethyl-7-carbaguanosine(34) in tRNA + guanine. The protein operates within tRNA modification; tRNA-queuosine biosynthesis. Catalyzes the base-exchange of a guanine (G) residue with the queuine precursor 7-aminomethyl-7-deazaguanine (PreQ1) at position 34 (anticodon wobble position) in tRNAs with GU(N) anticodons (tRNA-Asp, -Asn, -His and -Tyr). Catalysis occurs through a double-displacement mechanism. The nucleophile active site attacks the C1' of nucleotide 34 to detach the guanine base from the RNA, forming a covalent enzyme-RNA intermediate. The proton acceptor active site deprotonates the incoming PreQ1, allowing a nucleophilic attack on the C1' of the ribose to form the product. After dissociation, two additional enzymatic reactions on the tRNA convert PreQ1 to queuine (Q), resulting in the hypermodified nucleoside queuosine (7-(((4,5-cis-dihydroxy-2-cyclopenten-1-yl)amino)methyl)-7-deazaguanosine). This Moorella thermoacetica (strain ATCC 39073 / JCM 9320) protein is Queuine tRNA-ribosyltransferase.